The following is a 336-amino-acid chain: Phosphate acyltransferase (336 aa).

The protein belongs to the PlsX family. Homodimer. Probably interacts with PlsY.

The protein resides in the cytoplasm. It carries out the reaction a fatty acyl-[ACP] + phosphate = an acyl phosphate + holo-[ACP]. Its pathway is lipid metabolism; phospholipid metabolism. In terms of biological role, catalyzes the reversible formation of acyl-phosphate (acyl-PO(4)) from acyl-[acyl-carrier-protein] (acyl-ACP). This enzyme utilizes acyl-ACP as fatty acyl donor, but not acyl-CoA. The protein is Phosphate acyltransferase of Pseudomonas putida (strain GB-1).